Consider the following 254-residue polypeptide: Thiazole synthase (254 aa).

Lys95 acts as the Schiff-base intermediate with DXP in catalysis. Residues Gly156, 182–183 (AG), and 204–205 (NT) contribute to the 1-deoxy-D-xylulose 5-phosphate site.

Belongs to the ThiG family. As to quaternary structure, homotetramer. Forms heterodimers with either ThiH or ThiS.

It localises to the cytoplasm. It carries out the reaction [ThiS sulfur-carrier protein]-C-terminal-Gly-aminoethanethioate + 2-iminoacetate + 1-deoxy-D-xylulose 5-phosphate = [ThiS sulfur-carrier protein]-C-terminal Gly-Gly + 2-[(2R,5Z)-2-carboxy-4-methylthiazol-5(2H)-ylidene]ethyl phosphate + 2 H2O + H(+). It participates in cofactor biosynthesis; thiamine diphosphate biosynthesis. In terms of biological role, catalyzes the rearrangement of 1-deoxy-D-xylulose 5-phosphate (DXP) to produce the thiazole phosphate moiety of thiamine. Sulfur is provided by the thiocarboxylate moiety of the carrier protein ThiS. In vitro, sulfur can be provided by H(2)S. This is Thiazole synthase from Shewanella sp. (strain MR-7).